The sequence spans 173 residues: Siroheme decarboxylase alpha subunit (173 aa).

Substrate is bound by residues His115 and Arg119.

The protein belongs to the Ahb/Nir family. Forms a heterodimer composed of AhbA and AhbB.

It carries out the reaction siroheme + 2 H(+) = 12,18-didecarboxysiroheme + 2 CO2. The protein operates within porphyrin-containing compound metabolism; protoheme biosynthesis. Functionally, involved in siroheme-dependent heme b biosynthesis. Catalyzes the decarboxylation of siroheme into didecarboxysiroheme. Siroheme is decarboxylated to monodecarboxysiroheme, which is in turn decarboxylated to didecarboxysiroheme. This Desulfovibrio desulfuricans (strain ATCC 27774 / DSM 6949 / MB) protein is Siroheme decarboxylase alpha subunit.